A 218-amino-acid chain; its full sequence is Small ribosomal subunit protein uS3 (218 aa).

Residues 38–106 (IREFISKRLS…RVHINILEIK (69 aa)) enclose the KH type-2 domain.

Belongs to the universal ribosomal protein uS3 family. In terms of assembly, part of the 30S ribosomal subunit. Forms a tight complex with proteins S10 and S14.

Binds the lower part of the 30S subunit head. Binds mRNA in the 70S ribosome, positioning it for translation. The sequence is that of Small ribosomal subunit protein uS3 from Bacillus pumilus (strain SAFR-032).